We begin with the raw amino-acid sequence, 455 residues long: MEANFQQAVKKLVNDFEYPTESLREAVKEFDELRQKGLQKNGEVLAMAPAFISTLPTGAETGDFLALDFGGTNLRVCWIQLLGDGKYEMKHSKSVLPRECVRNESVKPIIDFMSDHVELFIKEHFPSKFGCPEEEYLPMGFTFSYPANQVSITESYLLRWTKGLNIPEAINKDFAQFLTEGFKARNLPIRIEAVINDTVGTLVTRAYTSKESDTFMGIIFGTGTNGAYVEQMNQIPKLAGKCTGDHMLINMEWGATDFSCLHSTRYDLLLDHDTPNAGRQIFEKRVGGMYLGELFRRALFHLIKVYNFNEGIFPPSITDAWSLETSVLSRMMVERSAENVRNVLSTFKFRFRSDEEALYLWDAAHAIGRRAARMSAVPIASLYLSTGRAGKKSDVGVDGSLVEHYPHFVDMLREALRELIGDNEKLISIGIAKDGSGIGAALCALQAVKEKKGLA.

Residues 3-445 form the Hexokinase domain; sequence ANFQQAVKKL…SGIGAALCAL (443 aa). Residues 57–195 form a hexokinase small subdomain region; sequence TGAETGDFLA…NLPIRIEAVI (139 aa). 68-73 provides a ligand contact to ATP; it reads DFGGTN. Substrate-binding positions include 144 to 145, 161 to 162, and 196 to 197; these read SY, TK, and ND. Residues 196–434 form a hexokinase large subdomain region; it reads NDTVGTLVTR…KLISIGIAKD (239 aa). Thr-222 lines the ATP pocket. Substrate is bound by residues Asn-225, Glu-252, and Glu-283. ATP contacts are provided by residues 288–289, 325–329, and 400–404; these read GM, TSVLS, and SLVEH.

Belongs to the hexokinase family. In terms of assembly, monomer.

The catalysed reaction is a D-hexose + ATP = a D-hexose 6-phosphate + ADP + H(+). The enzyme catalyses D-mannose + ATP = D-mannose 6-phosphate + ADP + H(+). It catalyses the reaction D-fructose + ATP = D-fructose 6-phosphate + ADP + H(+). It carries out the reaction D-glucose + ATP = D-glucose 6-phosphate + ADP + H(+). It participates in carbohydrate metabolism; hexose metabolism. The protein operates within carbohydrate degradation; glycolysis; D-glyceraldehyde 3-phosphate and glycerone phosphate from D-glucose: step 1/4. Catalyzes the phosphorylation of hexose (six-carbon sugars) to hexose 6-phosphate. Phosphorylates D-glucose, D-fructose and D-mannose. Compared to hxk1, has a much higher affinity for D-glucose. Constitutes the initial enzyme of glycolysis by catalyzing the phosphorylation of glucose to D-glucose 6-phosphate. The sequence is that of Hexokinase-2 from Schizosaccharomyces pombe (strain 972 / ATCC 24843) (Fission yeast).